Reading from the N-terminus, the 382-residue chain is tRNA (guanine(26)-N(2))-dimethyltransferase (382 aa).

The region spanning 4 to 373 (VEIIEGKARI…KNLDEIKECI (370 aa)) is the Trm1 methyltransferase domain. Residues Arg44, Arg69, and Asp87 each contribute to the S-adenosyl-L-methionine site. Zn(2+)-binding residues include Cys246, Cys249, Cys263, and Cys266.

Belongs to the class I-like SAM-binding methyltransferase superfamily. Trm1 family.

It catalyses the reaction guanosine(26) in tRNA + 2 S-adenosyl-L-methionine = N(2)-dimethylguanosine(26) in tRNA + 2 S-adenosyl-L-homocysteine + 2 H(+). Dimethylates a single guanine residue at position 26 of a number of tRNAs using S-adenosyl-L-methionine as donor of the methyl groups. This Sulfolobus acidocaldarius (strain ATCC 33909 / DSM 639 / JCM 8929 / NBRC 15157 / NCIMB 11770) protein is tRNA (guanine(26)-N(2))-dimethyltransferase.